Here is a 944-residue protein sequence, read N- to C-terminus: Protein translocase subunit SecA (944 aa).

Residues glutamine 77, 95 to 99 (GEGKT), and aspartate 484 each bind ATP. Residues 920–944 (EQEKQTKKKKKKKPHDDETTKVKIG) form a disordered region. Over residues 933-944 (PHDDETTKVKIG) the composition is skewed to basic and acidic residues.

It belongs to the SecA family. In terms of assembly, monomer and homodimer. Part of the essential Sec protein translocation apparatus which comprises SecA, SecYEG and auxiliary proteins SecDF. Other proteins may also be involved.

Its subcellular location is the cell membrane. It is found in the cytoplasm. It catalyses the reaction ATP + H2O + cellular proteinSide 1 = ADP + phosphate + cellular proteinSide 2.. Its function is as follows. Part of the Sec protein translocase complex. Interacts with the SecYEG preprotein conducting channel. Has a central role in coupling the hydrolysis of ATP to the transfer of proteins into and across the cell membrane, serving as an ATP-driven molecular motor driving the stepwise translocation of polypeptide chains across the membrane. This chain is Protein translocase subunit SecA, found in Mycoplasma capricolum subsp. capricolum (strain California kid / ATCC 27343 / NCTC 10154).